Reading from the N-terminus, the 452-residue chain is Pup--protein ligase (452 aa).

Glu-9 is a binding site for Mg(2+). Arg-53 lines the ATP pocket. Tyr-55 lines the Mg(2+) pocket. The active-site Proton acceptor is Asp-57. Mg(2+) is bound at residue Glu-63. Residues Thr-66 and Trp-419 each coordinate ATP.

This sequence belongs to the Pup ligase/Pup deamidase family. Pup-conjugating enzyme subfamily.

The enzyme catalyses ATP + [prokaryotic ubiquitin-like protein]-L-glutamate + [protein]-L-lysine = ADP + phosphate + N(6)-([prokaryotic ubiquitin-like protein]-gamma-L-glutamyl)-[protein]-L-lysine.. It functions in the pathway protein degradation; proteasomal Pup-dependent pathway. It participates in protein modification; protein pupylation. Functionally, catalyzes the covalent attachment of the prokaryotic ubiquitin-like protein modifier Pup to the proteasomal substrate proteins, thereby targeting them for proteasomal degradation. This tagging system is termed pupylation. The ligation reaction involves the side-chain carboxylate of the C-terminal glutamate of Pup and the side-chain amino group of a substrate lysine. This Mycobacterium tuberculosis (strain KZN 1435 / MDR) protein is Pup--protein ligase.